The primary structure comprises 525 residues: M-phase inducer phosphatase 1 (525 aa).

A Phosphodegron motif is present at residues 73 to 83 (MGSSESTDSGF). Phosphoserine; by CHEK1 is present on serine 75. Phosphoserine; by NEK11 is present on residues serine 78, serine 81, and serine 87. Serine 106 carries the phosphoserine modification. Serine 123 is subject to Phosphoserine; by CHEK1 and CHEK2. Residues 140–142 (KEN) carry the KEN box motif. Serine 177 carries the post-translational modification Phosphoserine; by CHEK1. 2 disordered regions span residues 179 to 204 (PARMLSSNERDGNEPGNSIPFMPQSP) and 262 to 308 (SASC…PEKP). Serine 279 and serine 293 each carry phosphoserine; by CHEK1 and CHEK2. Residues 294–306 (VAGASPEEAASPE) show a composition bias toward low complexity. A Phosphoserine modification is found at serine 322. A Rhodanese domain is found at 377 to 483 (LIKEFVIIDC…FFLKCQSHCE (107 aa)). The active site involves cysteine 432. Threonine 508 is modified (phosphothreonine; by CHEK1). Phosphoserine; by PLK3 is present on residues serine 514 and serine 520.

Belongs to the MPI phosphatase family. As to quaternary structure, interacts with CCNB1/cyclin B1. Interacts with YWHAE/14-3-3 epsilon when phosphorylated. Interacts with CUL1 specifically when CUL1 is neddylated and active. Interacts with BTRC/BTRCP1 and FBXW11/BTRCP2. Interactions with CUL1, BTRC and FBXW11 are enhanced upon DNA damage. Interacts with HSP90AB1; prevents heat shock-mediated CDC25A degradation and contributes to cell cycle progression. In terms of processing, phosphorylated by CHEK1 on Ser-75, Ser-123, Ser-177, Ser-279, Ser-293 and Thr-508 during checkpoint mediated cell cycle arrest. Also phosphorylated by CHEK2 on Ser-123, Ser-279, and Ser-293 during checkpoint mediated cell cycle arrest. Phosphorylation on Ser-177 and Thr-508 creates binding sites for YWHAE/14-3-3 epsilon which inhibits CDC25A. Phosphorylation on Ser-75, Ser-123, Ser-177, Ser-279 and Ser-293 may also promote ubiquitin-dependent proteolysis of CDC25A by the SCF complex. Phosphorylation of CDC25A at Ser-75 by CHEK1 primes it for subsequent phosphorylation at Ser-78, Ser-81 and Ser-87 by NEK11. Phosphorylation by NEK11 is required for BTRC-mediated polyubiquitination and degradation. Phosphorylation by PIM1 leads to an increase in phosphatase activity. Phosphorylated by PLK3 following DNA damage, leading to promote its ubiquitination and degradation. Ubiquitinated by the anaphase promoting complex/cyclosome (APC/C) ubiquitin ligase complex that contains FZR1/CDH1 during G1 phase leading to its degradation by the proteasome. Ubiquitinated by a SCF complex containing BTRC and FBXW11 during S phase leading to its degradation by the proteasome. Deubiquitination by USP17L2/DUB3 leads to its stabilization.

It catalyses the reaction O-phospho-L-tyrosyl-[protein] + H2O = L-tyrosyl-[protein] + phosphate. Stimulated by B-type cyclins. Stimulated by PIM1-mediated phosphorylation. In terms of biological role, tyrosine protein phosphatase which functions as a dosage-dependent inducer of mitotic progression. Directly dephosphorylates CDK1 and stimulates its kinase activity. Also dephosphorylates CDK2 in complex with cyclin-E, in vitro. This chain is M-phase inducer phosphatase 1 (CDC25A), found in Bos taurus (Bovine).